Consider the following 312-residue polypeptide: Ribonuclease H2 subunit B (312 aa).

Ala2 carries the post-translational modification N-acetylalanine. The interval 236–256 (EPSASLPNPPSKKIKLSDEPV) is disordered. Position 295 is an N6-acetyllysine (Lys295). Ser296 bears the Phosphoserine mark.

The protein belongs to the RNase H2 subunit B family. The RNase H2 complex is a heterotrimer composed of the catalytic subunit RNASEH2A and the non-catalytic subunits RNASEH2B and RNASEH2C. Widely expressed.

Its subcellular location is the nucleus. Non catalytic subunit of RNase H2, an endonuclease that specifically degrades the RNA of RNA:DNA hybrids. Participates in DNA replication, possibly by mediating the removal of lagging-strand Okazaki fragment RNA primers during DNA replication. Mediates the excision of single ribonucleotides from DNA:RNA duplexes. The sequence is that of Ribonuclease H2 subunit B (RNASEH2B) from Homo sapiens (Human).